We begin with the raw amino-acid sequence, 321 residues long: Bifunctional methyltransferase/endonuclease (321 aa).

Positions 1 to 86 (MLSVDYENFD…PLGSAEKMRR (86 aa)) are probable methylated-DNA--protein-cysteine methyltransferase. The active site involves C61. The endonuclease V stretch occupies residues 87-318 (LIRDGITITN…YDFSTRNTAI (232 aa)). Residues D145 and D204 each contribute to the Mg(2+) site.

This sequence in the N-terminal section; belongs to the MGMT family. It in the C-terminal section; belongs to the endonuclease V family. Requires Mg(2+) as cofactor.

It localises to the cytoplasm. It catalyses the reaction Endonucleolytic cleavage at apurinic or apyrimidinic sites to products with a 5'-phosphate.. DNA repair enzyme involved in the repair of deaminated bases. Selectively cleaves double-stranded DNA at the second phosphodiester bond 3' to a deoxyinosine leaving behind the intact lesion on the nicked DNA. The polypeptide is Bifunctional methyltransferase/endonuclease (Thermoplasma volcanium (strain ATCC 51530 / DSM 4299 / JCM 9571 / NBRC 15438 / GSS1)).